The chain runs to 656 residues: DNA ligase (656 aa).

NAD(+)-binding positions include 32–36 (DAVYD) and 81–82 (SL). The N6-AMP-lysine intermediate role is filled by K112. NAD(+)-binding residues include R133, E167, and K306. Positions 400, 403, 416, and 421 each coordinate Zn(2+). In terms of domain architecture, BRCT spans 577–656 (KSSSVFNNKT…ELLKRLKELD (80 aa)).

It belongs to the NAD-dependent DNA ligase family. LigA subfamily. Requires Mg(2+) as cofactor. Mn(2+) is required as a cofactor.

It catalyses the reaction NAD(+) + (deoxyribonucleotide)n-3'-hydroxyl + 5'-phospho-(deoxyribonucleotide)m = (deoxyribonucleotide)n+m + AMP + beta-nicotinamide D-nucleotide.. In terms of biological role, DNA ligase that catalyzes the formation of phosphodiester linkages between 5'-phosphoryl and 3'-hydroxyl groups in double-stranded DNA using NAD as a coenzyme and as the energy source for the reaction. It is essential for DNA replication and repair of damaged DNA. The chain is DNA ligase from Helicobacter pylori (strain P12).